Here is a 113-residue protein sequence, read N- to C-terminus: Replication initiation control protein YabA (113 aa).

Zn(2+) is bound by residues H86, C88, C102, and C105.

The protein belongs to the YabA family. Homotetramer. Interacts with both DnaA and DnaN, acting as a bridge between these two proteins. Zn(2+) serves as cofactor.

It is found in the cytoplasm. The protein localises to the nucleoid. Functionally, involved in control of chromosome replication initiation. Inhibits the cooperative binding of DnaA to the oriC region, thus negatively regulating initiation of chromosome replication. Inhibits the ability of DnaA-ATP to form a helix on DNA; does not disassemble preformed DnaA-DNA helices. Decreases the residence time of DnaA on the chromosome at its binding sites (oriC, replication forks and promoter-binding sites). Tethers DnaA to the replication machinery via the DNA polymerase beta sliding clamp subunit (dnaN). Associates with oriC and other DnaA targets on the chromosome in a DnaA-dependent manner. The polypeptide is Replication initiation control protein YabA (Pediococcus pentosaceus (strain ATCC 25745 / CCUG 21536 / LMG 10740 / 183-1w)).